The sequence spans 1641 residues: Alpha-2-macroglobulin (1641 aa).

The N-terminal stretch at 1–31 is a signal peptide; sequence MRDRVAMMLRPLVRGWIPRAVLLLTVAFSFG. The N-palmitoyl cysteine moiety is linked to residue Cys32. Cys32 carries the S-diacylglycerol cysteine lipid modification. A cross-link (isoglutamyl cysteine thioester (Cys-Gln)) is located at residues 1166 to 1169; sequence CAEQ.

This sequence belongs to the protease inhibitor I39 (alpha-2-macroglobulin) family. Bacterial alpha-2-macroglobulin subfamily.

It localises to the cell membrane. Its function is as follows. Protects the bacterial cell from host peptidases. The polypeptide is Alpha-2-macroglobulin (Xylella fastidiosa (strain Temecula1 / ATCC 700964)).